The chain runs to 143 residues: Peptidyl-prolyl cis-trans isomerase B (143 aa).

Positions 1–143 constitute a PPIase cyclophilin-type domain; the sequence is MKTGYFLLED…DVMKEVRVEG (143 aa).

This sequence belongs to the cyclophilin-type PPIase family.

The protein localises to the cytoplasm. The catalysed reaction is [protein]-peptidylproline (omega=180) = [protein]-peptidylproline (omega=0). Its activity is regulated as follows. Inhibited by cyclosporin A (CsA). Functionally, PPIases accelerate the folding of proteins. It catalyzes the cis-trans isomerization of proline imidic peptide bonds in oligopeptides. The sequence is that of Peptidyl-prolyl cis-trans isomerase B (ppiB) from Bacillus subtilis (strain 168).